The following is a 162-amino-acid chain: NADH-quinone oxidoreductase subunit I (162 aa).

4Fe-4S ferredoxin-type domains follow at residues 53–83 (LRRY…IEPE) and 93–122 (RRYD…EGPN). 8 residues coordinate [4Fe-4S] cluster: Cys-63, Cys-66, Cys-69, Cys-73, Cys-102, Cys-105, Cys-108, and Cys-112.

This sequence belongs to the complex I 23 kDa subunit family. In terms of assembly, NDH-1 is composed of 14 different subunits. Subunits NuoA, H, J, K, L, M, N constitute the membrane sector of the complex. The cofactor is [4Fe-4S] cluster.

It is found in the cell inner membrane. It catalyses the reaction a quinone + NADH + 5 H(+)(in) = a quinol + NAD(+) + 4 H(+)(out). Functionally, NDH-1 shuttles electrons from NADH, via FMN and iron-sulfur (Fe-S) centers, to quinones in the respiratory chain. The immediate electron acceptor for the enzyme in this species is believed to be ubiquinone. Couples the redox reaction to proton translocation (for every two electrons transferred, four hydrogen ions are translocated across the cytoplasmic membrane), and thus conserves the redox energy in a proton gradient. This is NADH-quinone oxidoreductase subunit I from Paramagnetospirillum magneticum (strain ATCC 700264 / AMB-1) (Magnetospirillum magneticum).